The following is a 203-amino-acid chain: ATP-dependent Clp protease proteolytic subunit (203 aa).

Catalysis depends on Ser98, which acts as the Nucleophile. Residue His123 is part of the active site.

This sequence belongs to the peptidase S14 family. As to quaternary structure, fourteen ClpP subunits assemble into 2 heptameric rings which stack back to back to give a disk-like structure with a central cavity, resembling the structure of eukaryotic proteasomes.

Its subcellular location is the cytoplasm. The catalysed reaction is Hydrolysis of proteins to small peptides in the presence of ATP and magnesium. alpha-casein is the usual test substrate. In the absence of ATP, only oligopeptides shorter than five residues are hydrolyzed (such as succinyl-Leu-Tyr-|-NHMec, and Leu-Tyr-Leu-|-Tyr-Trp, in which cleavage of the -Tyr-|-Leu- and -Tyr-|-Trp bonds also occurs).. Cleaves peptides in various proteins in a process that requires ATP hydrolysis. Has a chymotrypsin-like activity. Plays a major role in the degradation of misfolded proteins. The polypeptide is ATP-dependent Clp protease proteolytic subunit (Desulfotalea psychrophila (strain LSv54 / DSM 12343)).